The chain runs to 259 residues: uncharacterized protein (259 aa).

Disordered regions lie at residues 22 to 68 (GLQP…VSFG), 111 to 133 (REEQ…DEVE), and 181 to 202 (LGGK…KKKQ). Residues 50–63 (NEEEDAISDMEDKE) are compositionally biased toward acidic residues. Ser-127 bears the Phosphoserine mark.

This is an uncharacterized protein from Schizosaccharomyces pombe (strain 972 / ATCC 24843) (Fission yeast).